We begin with the raw amino-acid sequence, 428 residues long: Aspartic protease 10 (428 aa).

The signal sequence occupies residues 1-16 (MKTFIALLALLTVVSA). In terms of domain architecture, Peptidase A1 spans 72 to 425 (YMVQISLGSP…DMKSGRLGLA (354 aa)). The active site involves D90. 2 N-linked (GlcNAc...) asparagine glycosylation sites follow: N155 and N191. D318 is an active-site residue. An intrachain disulfide couples C353 to C385.

The protein belongs to the peptidase A1 family. Post-translationally, proteolytically cleaved. In terms of tissue distribution, synthesized in the intestine. When secreted in low heme conditions, localizes to neurons near the anterior and posterior regions of the body and in coelomocytes.

Its subcellular location is the secreted. Functionally, aspartic protease which plays a role in heme homeostasis and mediates inter-organ signaling between the intestine and extra-intestinal tissues when cellular heme levels are low. The polypeptide is Aspartic protease 10 (Caenorhabditis elegans).